A 143-amino-acid chain; its full sequence is Peptide methionine sulfoxide reductase MsrB (143 aa).

The 123-residue stretch at 5–127 (KEKRLKELNR…NSAALKFIPK (123 aa)) folds into the MsrB domain. The Nucleophile role is filled by cysteine 116.

Belongs to the MsrB Met sulfoxide reductase family.

It catalyses the reaction L-methionyl-[protein] + [thioredoxin]-disulfide + H2O = L-methionyl-(R)-S-oxide-[protein] + [thioredoxin]-dithiol. The chain is Peptide methionine sulfoxide reductase MsrB from Bacillus pumilus (strain SAFR-032).